The chain runs to 63 residues: Large ribosomal subunit protein bL32 (63 aa).

Belongs to the bacterial ribosomal protein bL32 family.

In Aquifex aeolicus (strain VF5), this protein is Large ribosomal subunit protein bL32 (rpmF).